The following is a 296-amino-acid chain: Phosphatidylglycerol--prolipoprotein diacylglyceryl transferase (296 aa).

The next 3 helical transmembrane spans lie at 17-37 (LAVRWYGLMYLVGFILAIVVG), 59-79 (MMFYGVLGVVLGGRLGYVLFY), and 97-117 (GGMSFHGGFLGVTLAMALFAW). Arg142 lines the a 1,2-diacyl-sn-glycero-3-phospho-(1'-sn-glycerol) pocket. 2 helical membrane-spanning segments follow: residues 230-250 (MGAISALFLIGYGAARFTVEF) and 265-285 (LSMGQWLSLPMIVAGVLMMIW).

It belongs to the Lgt family.

The protein resides in the cell inner membrane. It catalyses the reaction L-cysteinyl-[prolipoprotein] + a 1,2-diacyl-sn-glycero-3-phospho-(1'-sn-glycerol) = an S-1,2-diacyl-sn-glyceryl-L-cysteinyl-[prolipoprotein] + sn-glycerol 1-phosphate + H(+). It functions in the pathway protein modification; lipoprotein biosynthesis (diacylglyceryl transfer). In terms of biological role, catalyzes the transfer of the diacylglyceryl group from phosphatidylglycerol to the sulfhydryl group of the N-terminal cysteine of a prolipoprotein, the first step in the formation of mature lipoproteins. The protein is Phosphatidylglycerol--prolipoprotein diacylglyceryl transferase of Burkholderia mallei (strain NCTC 10247).